The following is a 293-amino-acid chain: Plant cysteine oxidase 1 (293 aa).

Positions 148, 150, and 211 each coordinate Fe cation. The tract at residues 250–293 is disordered; sequence SEDDDVLSSEEEKEGYAWLQERDDNPEDHTNVVGALYRGPKVED. Positions 251–262 are enriched in acidic residues; that stretch reads EDDDVLSSEEEK. Residues 269–279 are compositionally biased toward basic and acidic residues; that stretch reads QERDDNPEDHT.

This sequence belongs to the cysteine dioxygenase family. It depends on Fe(2+) as a cofactor.

The protein resides in the nucleus. Its subcellular location is the cytoplasm. It carries out the reaction L-cysteine + O2 = 3-sulfino-L-alanine + H(+). Its function is as follows. Catalyzes the oxidation of N-terminal cysteine residues (N-Cys), thus preparing the protein for N-end rule pathway-mediated proteasomal degradation, upstream of the N-end rule enzymes ATE1, ATE2 and PRT6. Controls the preparation of the group VII ethylene response factor (ERF-VII) proteins for degradation via the 26S proteasome N-end rule pathway. Acts as an oxygen sensor that controls the stability of ERF-VII proteins, which are stabilized in flooding-induced hypoxia, and regulate transcriptional adaptation to these adverse conditions. Not active on Cys located inside or at the C-terminus of a peptide. Acts redundantly with PCO2 to repress the anaerobic response. This Arabidopsis thaliana (Mouse-ear cress) protein is Plant cysteine oxidase 1.